The primary structure comprises 193 residues: NADH-quinone oxidoreductase subunit B (193 aa).

Residues cysteine 72, cysteine 73, cysteine 137, and cysteine 167 each coordinate [4Fe-4S] cluster.

This sequence belongs to the complex I 20 kDa subunit family. In terms of assembly, NDH-1 is composed of 14 different subunits. Subunits NuoB, C, D, E, F, and G constitute the peripheral sector of the complex. It depends on [4Fe-4S] cluster as a cofactor.

The protein localises to the cell inner membrane. The catalysed reaction is a quinone + NADH + 5 H(+)(in) = a quinol + NAD(+) + 4 H(+)(out). In terms of biological role, NDH-1 shuttles electrons from NADH, via FMN and iron-sulfur (Fe-S) centers, to quinones in the respiratory chain. The immediate electron acceptor for the enzyme in this species is believed to be ubiquinone. Couples the redox reaction to proton translocation (for every two electrons transferred, four hydrogen ions are translocated across the cytoplasmic membrane), and thus conserves the redox energy in a proton gradient. This chain is NADH-quinone oxidoreductase subunit B, found in Caulobacter vibrioides (strain ATCC 19089 / CIP 103742 / CB 15) (Caulobacter crescentus).